We begin with the raw amino-acid sequence, 429 residues long: Adenylosuccinate synthetase (429 aa).

Residues 12 to 18 (GDEGKGK) and 40 to 42 (GHT) each bind GTP. Asp-13 acts as the Proton acceptor in catalysis. Residues Asp-13 and Gly-40 each contribute to the Mg(2+) site. Residues 13–16 (DEGK), 38–41 (NAGH), Thr-129, Arg-143, Gln-224, Thr-239, and Arg-303 each bind IMP. His-41 serves as the catalytic Proton donor. Position 299–305 (299–305 (ATTGRKR)) interacts with substrate. GTP contacts are provided by residues Arg-305, 331-333 (KLD), and 413-415 (SVG).

This sequence belongs to the adenylosuccinate synthetase family. Homodimer. It depends on Mg(2+) as a cofactor.

Its subcellular location is the cytoplasm. The catalysed reaction is IMP + L-aspartate + GTP = N(6)-(1,2-dicarboxyethyl)-AMP + GDP + phosphate + 2 H(+). The protein operates within purine metabolism; AMP biosynthesis via de novo pathway; AMP from IMP: step 1/2. Functionally, plays an important role in the de novo pathway of purine nucleotide biosynthesis. Catalyzes the first committed step in the biosynthesis of AMP from IMP. In Desulfosudis oleivorans (strain DSM 6200 / JCM 39069 / Hxd3) (Desulfococcus oleovorans), this protein is Adenylosuccinate synthetase.